Consider the following 485-residue polypeptide: Caspid protein (485 aa).

N5 and N178 each carry an N-linked (GlcNAc...) asparagine; by host glycan. The segment at 236–262 is particle formation; that stretch reads IALTLFNLADTLLGGLPTELISSAGGQ. The N-linked (GlcNAc...) asparagine; by host glycan is linked to N430. The interval 453-478 is oligomerization; sequence TTSLGAGPVSISAVAVLAPHSALALL.

It belongs to the hepevirus capsid protein family. In terms of assembly, self-assembles to form the capsid. The capsid is dominated by dimers that define the 30 morphological units. Interacts with phosphorylated protein ORF3. Interacts with host TMEM134. Interacts with host ASGR1 and ASGR2; these interactions facilitate infection of host hepatocytes. In terms of processing, not N-glycosylated.

Its subcellular location is the virion. It localises to the host cytoplasm. The protein resides in the host endoplasmic reticulum. It is found in the host Golgi apparatus. The protein localises to the host cell surface. Its subcellular location is the host nucleus. In terms of biological role, forms an icosahedral capsid with a T=1 symmetry and a 34 nm diameter. The capsid is composed of 60 copies linked to each other. Binds to the 5' end of the genomic RNA to mediate genome encapsidation. Binds to heparin surface proteoglycans (HSPGs) to mediate viral entry. Additionally, the interactions with host ASGR1 and ASGR2 facilitate viral infection of hepatocytes. Inhibits IFN production by blocking host TBK1-induced IRF3 phosphorylation. The nuclear form probably modulates host gene expression. This chain is Caspid protein, found in Hepatitis E virus (isolate Rhesus/HT-4) (HEV).